The following is a 131-amino-acid chain: MEVMSHLVHWVFLAVYMYELNAELISHLHPPEQEISTDSCVFPFVYADGFHYSCISLHSDYDWCSLDFQFQGRWRYCTAQDPPKCIFPFQFKQKLIKKCTKEGYILNRSWCSLTENYNQDGKWKQCSPNNF.

The N-terminal stretch at 1 to 22 (MEVMSHLVHWVFLAVYMYELNA) is a signal peptide. 2 consecutive Fibronectin type-II domains span residues 35–79 (ISTD…YCTA) and 80–128 (QDPP…QCSP). 4 cysteine pairs are disulfide-bonded: Cys40–Cys64, Cys54–Cys77, Cys85–Cys111, and Cys99–Cys126.

This sequence belongs to the seminal plasma protein family. As to expression, epididymis.

The protein localises to the secreted. In terms of biological role, binds sperm in vitro but has no effect on sperm capacitation. Also binds gelatin and heparin, but not chondroitin sulfate B or phospholipid liposomes. This Mus musculus (Mouse) protein is Binder of sperm protein homolog 2.